Consider the following 235-residue polypeptide: CD-NTase-associated protein 13 (235 aa).

2 helical membrane passes run 14–34 and 45–65; these read IVHH…LIWI and IIFT…IVGL.

This sequence in the C-terminal section; belongs to the bacterial STING family. As to quaternary structure, homodimer.

Its subcellular location is the cell inner membrane. Functionally, effector protein of a CBASS antivirus system. CBASS (cyclic oligonucleotide-based antiphage signaling system) provides immunity against bacteriophage. The CD-NTase protein synthesizes cyclic nucleotides in response to infection; these serve as specific second messenger signals. The signals activate a diverse range of effectors, leading to bacterial cell death and thus abortive phage infection. A type I-D(GG) CBASS system. Its function is as follows. Binds cyclic dinucleotides: binds c-di-GMP (synthesized by the cognate CdnE encoded upstream in the same operon), cyclic 3'3'-cyclic GMP-AMP (3'3'-cGAMP) but not cUMP-AMP. The effector protein for this CBASS system, its activity is stimulated by c-di-GMP and leads to cell death. This chain is CD-NTase-associated protein 13, found in Flavobacteriaceae sp. genome_bin_11.